A 205-amino-acid polypeptide reads, in one-letter code: Small ribosomal subunit protein uS4B (205 aa).

The region spanning 94-157 is the S4 RNA-binding domain; sequence RRLDNVVFRA…LNLPIVLGTL (64 aa).

Belongs to the universal ribosomal protein uS4 family. As to quaternary structure, part of the 30S ribosomal subunit. Contacts protein S5. The interaction surface between S4 and S5 is involved in control of translational fidelity.

In terms of biological role, one of the primary rRNA binding proteins, it binds directly to 16S rRNA where it nucleates assembly of the body of the 30S subunit. With S5 and S12 plays an important role in translational accuracy. This chain is Small ribosomal subunit protein uS4B, found in Nitrosomonas europaea (strain ATCC 19718 / CIP 103999 / KCTC 2705 / NBRC 14298).